The following is a 329-amino-acid chain: MKTPITVTVTGAAGQIAYSLLFRIASGSMLGPDQPINLRLLEIPPAMNALEGVVMELRDAAFPLVNEIVPTSDPDEAFAGANWCLLVGSVPRKAGMERKDLLDINGKVFIGQGQAIARSAAKDVRVLVVGNPCNTNALIAMHNASGVPSDRFFAMTRLDENRAKSQLAEKAGVHVTEVTNMAIWGNHSSTQYPDFTNARIGGKPVTEVIKDTEWLKGDFITTVQQRGAAIIKARGASSAASAASAAVDTVRSLATQTPEGDWYSVAVCSDGSYGIEKGLICSFPVRTTKDGGWEIVQGLPVDAFSREKIDATVNELKEERDAVSSLLKH.

11-17 (GAAGQIA) is an NAD(+) binding site. Arg-92 and Arg-98 together coordinate substrate. NAD(+)-binding positions include Asn-105, Gln-112, and 129–131 (VGN). The substrate site is built by Asn-131 and Arg-162. The active-site Proton acceptor is the His-187.

It belongs to the LDH/MDH superfamily. MDH type 2 family.

It catalyses the reaction (S)-malate + NAD(+) = oxaloacetate + NADH + H(+). Catalyzes the reversible oxidation of malate to oxaloacetate. The sequence is that of Malate dehydrogenase from Akkermansia muciniphila (strain ATCC BAA-835 / DSM 22959 / JCM 33894 / BCRC 81048 / CCUG 64013 / CIP 107961 / Muc).